A 383-amino-acid chain; its full sequence is ATP phosphoribosyltransferase regulatory subunit (383 aa).

This sequence belongs to the class-II aminoacyl-tRNA synthetase family. HisZ subfamily. Heteromultimer composed of HisG and HisZ subunits.

It is found in the cytoplasm. The protein operates within amino-acid biosynthesis; L-histidine biosynthesis; L-histidine from 5-phospho-alpha-D-ribose 1-diphosphate: step 1/9. Functionally, required for the first step of histidine biosynthesis. May allow the feedback regulation of ATP phosphoribosyltransferase activity by histidine. The chain is ATP phosphoribosyltransferase regulatory subunit from Desulfitobacterium hafniense (strain DSM 10664 / DCB-2).